Here is a 442-residue protein sequence, read N- to C-terminus: Cell adhesion molecule 1 (442 aa).

The N-terminal stretch at 1-44 (MASVVLPSGSQCAAAAAAAAPPGLRLRLLLLLFSAAALIPTGDG) is a signal peptide. One can recognise an Ig-like V-type domain in the interval 45–139 (QNLFTKDVTV…PPQESYTTIT (95 aa)). Topologically, residues 45–374 (QNLFTKDVTV…EEGSIRAVDH (330 aa)) are extracellular. Residues Cys64 and Cys124 are joined by a disulfide bond. 4 N-linked (GlcNAc...) asparagine glycosylation sites follow: Asn67, Asn101, Asn113, and Asn165. Ig-like C2-type domains lie at 144–238 (PRNL…RYLE) and 243–329 (PQVH…YMLY). Disulfide bonds link Cys166–Cys220 and Cys267–Cys313. Asn304 and Asn308 each carry an N-linked (GlcNAc...) asparagine glycan. The helical transmembrane segment at 375–395 (AVIGGVVAVVVFAMLCLLIIL) threads the bilayer. Over 396 to 442 (GRYFARHKGTYFTHEAKGADDAADADTAIINAEGGQNNSEEKKEYFI) the chain is Cytoplasmic. Thr422 carries the phosphothreonine modification. Phosphoserine is present on Ser434.

It belongs to the nectin family. As to quaternary structure, homodimer (via Ig-like V-type domain). Interacts with FARP1. Interacts (via Ig-like V-type domain) with CRTAM (via Ig-like V-type domain); the interaction competes with CRTAM homodimerization and CADM1 homodimerization. Interacts (via C-terminus) with EPB41L3/DAL1. The interaction with EPB41L3/DAL1 may act to anchor CADM1 to the actin cytoskeleton. Interacts (via C-terminus) with MPP2 (via PDZ domain). Interacts (via C-terminus) with MPP3 (via PDZ domain); this interaction connects CADM1 with DLG1. Interacts (via C-terminus) with PALS2 (via PDZ domain). (Microbial infection) Interacts with herpes virus 8 proteins vFLIP and vGPCR; these interactions are essential for NF-kappa-B activation. Post-translationally, glycosylation at Asn-67 and Asn-101 promotes adhesive binding and synapse induction.

It is found in the cell membrane. Its subcellular location is the synapse. Mediates homophilic cell-cell adhesion in a Ca(2+)-independent manner. Also mediates heterophilic cell-cell adhesion with CADM3 and NECTIN3 in a Ca(2+)-independent manner. Interaction with CRTAM promotes natural killer (NK) cell cytotoxicity and interferon-gamma (IFN-gamma) secretion by CD8+ cells in vitro as well as NK cell-mediated rejection of tumors expressing CADM1 in vivo. In mast cells, may mediate attachment to and promote communication with nerves. CADM1, together with MITF, is essential for development and survival of mast cells in vivo. By interacting with CRTAM and thus promoting the adhesion between CD8+ T-cells and CD8+ dendritic cells, regulates the retention of activated CD8+ T-cell within the draining lymph node. Required for the intestinal retention of intraepithelial CD4+ CD8+ T-cells and, to a lesser extent, intraepithelial and lamina propria CD8+ T-cells and CD4+ T-cells. Interaction with CRTAM promotes the adhesion to gut-associated CD103+ dendritic cells, which may facilitate the expression of gut-homing and adhesion molecules on T-cells and the conversion of CD4+ T-cells into CD4+ CD8+ T-cells. Acts as a synaptic cell adhesion molecule and plays a role in the formation of dendritic spines and in synapse assembly. May be involved in neuronal migration, axon growth, pathfinding, and fasciculation on the axons of differentiating neurons. May play diverse roles in the spermatogenesis including in the adhesion of spermatocytes and spermatids to Sertoli cells and for their normal differentiation into mature spermatozoa. Acts as a tumor suppressor in non-small-cell lung cancer (NSCLC) cells. May contribute to the less invasive phenotypes of lepidic growth tumor cells. Its function is as follows. (Microbial infection) Induces cell fusion in neuron infected by a neuropathogenic strain of measles. Interacts with measles hemagglutinin to trigger hyperfusogenic F-mediated membrane fusion and presumably transsynaptic cell-to-cell transmission of the virus. The protein is Cell adhesion molecule 1 of Homo sapiens (Human).